The sequence spans 380 residues: MTDYPIKYRLIKTEKHTGARLGEIITPHGTFPTPMFMPVGTQATVKTQSPEELKAIGSGIILSNTYHLWLRPGDELIARSGGLHKFMNWDQPILTDSGGFQVYSLADSRNITEEGVTFKNHLNGSKMFLSPEKAISIQNNLGSDIMMSFDECPQFYQPYDYVKKSIERTSRWAERGLKAHRRPHDQGLFGIVQGAGFEDLRRQSAADLVAMDFPGYSIGGLAVGESHEEMNAVLDFTTPLLPENKPRYLMGVGAPDSLIDGVIRGVDMFDCVLPTRIARNGTCMTSEGRLVIKNAKFAEDFTPLDHDCDCYTCQNYSRAYIRHLLKADETFGIRLTSYHNLYFLVNLMKKVRQAIMDDNLLEFRQDFLERYGYNKSNRNF.

Asp-96 serves as the catalytic Proton acceptor. Substrate is bound by residues 96 to 100, Asp-150, Gln-193, and Gly-220; that span reads DSGGF. Residues 251–257 are RNA binding; it reads GVGAPDS. Asp-270 serves as the catalytic Nucleophile. Positions 275–279 are RNA binding; important for wobble base 34 recognition; sequence TRIAR. Cys-308, Cys-310, Cys-313, and His-339 together coordinate Zn(2+).

It belongs to the queuine tRNA-ribosyltransferase family. Homodimer. Within each dimer, one monomer is responsible for RNA recognition and catalysis, while the other monomer binds to the replacement base PreQ1. Requires Zn(2+) as cofactor.

It carries out the reaction 7-aminomethyl-7-carbaguanine + guanosine(34) in tRNA = 7-aminomethyl-7-carbaguanosine(34) in tRNA + guanine. Its pathway is tRNA modification; tRNA-queuosine biosynthesis. In terms of biological role, catalyzes the base-exchange of a guanine (G) residue with the queuine precursor 7-aminomethyl-7-deazaguanine (PreQ1) at position 34 (anticodon wobble position) in tRNAs with GU(N) anticodons (tRNA-Asp, -Asn, -His and -Tyr). Catalysis occurs through a double-displacement mechanism. The nucleophile active site attacks the C1' of nucleotide 34 to detach the guanine base from the RNA, forming a covalent enzyme-RNA intermediate. The proton acceptor active site deprotonates the incoming PreQ1, allowing a nucleophilic attack on the C1' of the ribose to form the product. After dissociation, two additional enzymatic reactions on the tRNA convert PreQ1 to queuine (Q), resulting in the hypermodified nucleoside queuosine (7-(((4,5-cis-dihydroxy-2-cyclopenten-1-yl)amino)methyl)-7-deazaguanosine). This Streptococcus pyogenes serotype M3 (strain ATCC BAA-595 / MGAS315) protein is Queuine tRNA-ribosyltransferase.